Here is a 131-residue protein sequence, read N- to C-terminus: Small ribosomal subunit protein uS11 (131 aa).

The protein belongs to the universal ribosomal protein uS11 family. Part of the 30S ribosomal subunit. Interacts with proteins S7 and S18. Binds to IF-3.

Its function is as follows. Located on the platform of the 30S subunit, it bridges several disparate RNA helices of the 16S rRNA. Forms part of the Shine-Dalgarno cleft in the 70S ribosome. The sequence is that of Small ribosomal subunit protein uS11 from Bacillus pumilus (strain SAFR-032).